The following is a 536-amino-acid chain: MAFMGTSSAVHPAILVILDGWGYREQTDGNAVAAAKTPIFDALKASYPFTLIHTSGKAVGLPRGQMGNSEVGHLNLGAGRMVPQELVRISDAVEEGTLLSNPELLRLCRTVRERGGKLHGVGLVSDGGVHSHIEHLFGLLDLAKREGFETLFIHGMSDGRDTPPTSGVAYFEKLEARIAETGFGTIATLGGRYFGMDRDRRWDRTEAMYRVMTETGPGTGKRASETLRESHAAGKTDEFVLPVRLAAGAVEPGDGVIYFNFRPDRARQLTRAFVQADFDGFVRPYLDPLAFLTFTQYDATLPVAVAFAPQSLDNLLGQVIAHHGLRQFRIAETEKYAHVTYFFNGGIETPLPGEERSMIQSPLVPTYDLKPEMAAREVTDHAVAAIETRQYSLIVINYANPDMVGHTGNFDATVKAVETVDACIGRLVEACVRAGGTMLLTADHGNAELMWDEQGNPWTAHTTNPVPFILIESEGLKIPGWGTDVQLRAGGSLGDIAPTILEILGLPQPAEMTGRSLLGESEIEIRTPRSPLRVGL.

Residues aspartate 19 and serine 69 each contribute to the Mn(2+) site. Serine 69 functions as the Phosphoserine intermediate in the catalytic mechanism. Substrate-binding positions include histidine 130, 160-161, arginine 192, arginine 198, 262-265, and lysine 335; these read RD and RPDR. Mn(2+) contacts are provided by aspartate 402, histidine 406, aspartate 443, histidine 444, and histidine 461.

It belongs to the BPG-independent phosphoglycerate mutase family. Monomer. Mn(2+) is required as a cofactor.

The enzyme catalyses (2R)-2-phosphoglycerate = (2R)-3-phosphoglycerate. The protein operates within carbohydrate degradation; glycolysis; pyruvate from D-glyceraldehyde 3-phosphate: step 3/5. Catalyzes the interconversion of 2-phosphoglycerate and 3-phosphoglycerate. The polypeptide is 2,3-bisphosphoglycerate-independent phosphoglycerate mutase (Gloeobacter violaceus (strain ATCC 29082 / PCC 7421)).